A 649-amino-acid polypeptide reads, in one-letter code: MLQRLVVALCLLGFAALTAAAAHQRPNFVVIFTDDQDGIQNSTHPRYQPKLHEHIRYPGIELKNYFVTTPVCCPSRTNLWRGQFSHNTNFTDVLGPHGGYAKWKSLGIDKSYLPVWLQNLGYNTYYVGKFLVDYSVSNYQNVPAGWTDIDALVTPYTFDYNNPGFSRNGATPNIYPGFYSTDVIADKAVAQIKTAVAAGKPFYAQISPIAPHTSTQIYFDPVANATKTFFYPPIPAPRHWELFSDATLPEGTSHKNLYEADVSDKPAWIRALPLAQQNNRTYLEEVYRLRLRSLASVDELIDRVVATLQEAGVLDNTYLIYSADNGYHVGTHRFGAGKVTAYDEDLRVPFLIRGPGIRASHSDKPANSKVGLHVDFAPTILTLAGAGDQVGDKALDGTPLGLYANDDGNLLADYPRPANHRNQFQGEFWGGWSDEVLHHIPRYTNNSWKAVRVYDEDNQQAWKLIVSCTNERELYDLKTDPGELCNIYNKTRAAVRTRLEALLAVLVVCKGESCTNPWKILHPEGSVNSWNQSLDRKYDKYYANVAPFQYRTCLPYQDHNNEVSAFRSTVAAAAAAAAAAAAQQPGRRRMYTWTSAGRQLSATASAIATSPQPRSEPFVAEVERHSVPVPAEVLQSDVAKWFDNPLALA.

Positions 1–22 (MLQRLVVALCLLGFAALTAAAA) are cleaved as a signal peptide. Residues Asp34 and Asp35 each coordinate Ca(2+). Residue Asn41 is glycosylated (N-linked (GlcNAc...) asparagine). Cys72 contributes to the Ca(2+) binding site. Cys72 serves as the catalytic Nucleophile. Cys72 carries the 3-oxoalanine (Cys) modification. Asn89, Asn224, and Asn279 each carry an N-linked (GlcNAc...) asparagine glycan. The Ca(2+) site is built by Asp324 and Asn325. 3 N-linked (GlcNAc...) asparagine glycosylation sites follow: Asn445, Asn489, and Asn531.

It belongs to the sulfatase family. It depends on Ca(2+) as a cofactor. The conversion to 3-oxoalanine (also known as C-formylglycine, FGly), of a serine or cysteine residue in prokaryotes and of a cysteine residue in eukaryotes, is critical for catalytic activity.

It localises to the periplasm. The catalysed reaction is an aryl sulfate + H2O = a phenol + sulfate + H(+). Its activity is regulated as follows. Inhibited by Na(3)BO(3) and KCN. No inhibition by sodium dodecyl sulfate, even at high concentration. Is commonly produced by soil microorganisms and plays an important role in the mineralization of sulfates. The sequence is that of Arylsulfatase from Volvox carteri (Green alga).